Consider the following 145-residue polypeptide: Large-conductance mechanosensitive channel (145 aa).

The next 2 membrane-spanning stretches (helical) occupy residues 14-34 (VIDL…VDSL) and 81-101 (GIFI…FLMV).

Belongs to the MscL family. Homopentamer.

Its subcellular location is the cell inner membrane. In terms of biological role, channel that opens in response to stretch forces in the membrane lipid bilayer. May participate in the regulation of osmotic pressure changes within the cell. The chain is Large-conductance mechanosensitive channel from Pelobacter propionicus (strain DSM 2379 / NBRC 103807 / OttBd1).